A 60-amino-acid polypeptide reads, in one-letter code: Large ribosomal subunit protein bL32B (60 aa).

Residues 1–19 are compositionally biased toward basic residues; that stretch reads MAVPKRKMSRANTRHRRSQ. The tract at residues 1-20 is disordered; sequence MAVPKRKMSRANTRHRRSQW.

This sequence belongs to the bacterial ribosomal protein bL32 family.

This Saccharopolyspora erythraea (strain ATCC 11635 / DSM 40517 / JCM 4748 / NBRC 13426 / NCIMB 8594 / NRRL 2338) protein is Large ribosomal subunit protein bL32B.